Consider the following 75-residue polypeptide: Small, acid-soluble spore protein Tlp (75 aa).

This sequence belongs to the Tlp family.

It localises to the spore core. This Geobacillus thermodenitrificans (strain NG80-2) protein is Small, acid-soluble spore protein Tlp.